The primary structure comprises 61 residues: Small ribosomal subunit protein uS14 (61 aa).

Residues Cys-24, Cys-27, Cys-40, and Cys-43 each contribute to the Zn(2+) site.

Belongs to the universal ribosomal protein uS14 family. Zinc-binding uS14 subfamily. Part of the 30S ribosomal subunit. Contacts proteins S3 and S10. The cofactor is Zn(2+).

Functionally, binds 16S rRNA, required for the assembly of 30S particles and may also be responsible for determining the conformation of the 16S rRNA at the A site. This is Small ribosomal subunit protein uS14 from Thermodesulfovibrio yellowstonii (strain ATCC 51303 / DSM 11347 / YP87).